The chain runs to 514 residues: MERPLHLLLVFLSSPWLLLLQGVSSLQFTRDDFPHDFAFGAGTSAYQYEGGAAEDGRTPSIWDTYTHSGRHPEDETGDVASDGYHKYKEDVKLMSEIGLEAYRFTISWSRLIPSGRGAVNLKALQFYNSMINELVKAGIQIHVVMYHMDLPQSLQDEYGGWISPKIVDDFTAYADVCFREFGDRVVHWTTVLEPNAMAQAGYDMGILPPNRCSYPFGSNCTAGNSSVEPYLFIHHSLLAHASAVRLYREKYKVAQKGIIGINIYSMWFYPFTDSAEEIGATERAKKFIYGWILHPLVFGDYPDTMKKAAGSRLPIFSNHESEMVTNSFDFIGLNHYSSVYTSNNNNVVKAPLQDLTADVATLFRVTKNDTPTPVFVPGTIVDPRGLEHALKYIREKYGNLPIYIQENGSGSSSETLDDVERINYLAKYIAATLKAIRSGANVKGYSMWSFVDLYELFGGYSTWHFGLVAVDFDSEKRRRQPRRSASWYSEFLKNNSVIRVEEDGFVSAASHAQL.

The N-terminal stretch at 1 to 25 (MERPLHLLLVFLSSPWLLLLQGVSS) is a signal peptide. The a beta-D-glucoside site is built by Gln47 and His147. The active-site Proton donor is the Glu193. The cysteines at positions 212 and 220 are disulfide-linked. 2 N-linked (GlcNAc...) asparagine glycosylation sites follow: Asn219 and Asn224. Residues Tyr336 and Glu406 each coordinate a beta-D-glucoside. Residue Glu406 is the Nucleophile of the active site. N-linked (GlcNAc...) asparagine glycosylation occurs at Asn407. Positions 448 and 465 each coordinate a beta-D-glucoside. Residue Asn494 is glycosylated (N-linked (GlcNAc...) asparagine).

The protein belongs to the glycosyl hydrolase 1 family.

It carries out the reaction Hydrolysis of terminal, non-reducing beta-D-glucosyl residues with release of beta-D-glucose.. This Oryza sativa subsp. japonica (Rice) protein is Beta-glucosidase 21 (BGLU21).